A 380-amino-acid chain; its full sequence is Dual-specificity RNA methyltransferase RlmN (380 aa).

Residue Glu94 is the Proton acceptor of the active site. The 240-residue stretch at 100-339 (DGDRATLCVS…VTVRKTRGDD (240 aa)) folds into the Radical SAM core domain. Cysteines 107 and 344 form a disulfide. Residues Cys114, Cys118, and Cys121 each coordinate [4Fe-4S] cluster. Residues 168-169 (GE), Ser200, 222-224 (SLH), and Asn301 contribute to the S-adenosyl-L-methionine site. Cys344 (S-methylcysteine intermediate) is an active-site residue.

Belongs to the radical SAM superfamily. RlmN family. [4Fe-4S] cluster is required as a cofactor.

It localises to the cytoplasm. It carries out the reaction adenosine(2503) in 23S rRNA + 2 reduced [2Fe-2S]-[ferredoxin] + 2 S-adenosyl-L-methionine = 2-methyladenosine(2503) in 23S rRNA + 5'-deoxyadenosine + L-methionine + 2 oxidized [2Fe-2S]-[ferredoxin] + S-adenosyl-L-homocysteine. The catalysed reaction is adenosine(37) in tRNA + 2 reduced [2Fe-2S]-[ferredoxin] + 2 S-adenosyl-L-methionine = 2-methyladenosine(37) in tRNA + 5'-deoxyadenosine + L-methionine + 2 oxidized [2Fe-2S]-[ferredoxin] + S-adenosyl-L-homocysteine. Its function is as follows. Specifically methylates position 2 of adenine 2503 in 23S rRNA and position 2 of adenine 37 in tRNAs. m2A2503 modification seems to play a crucial role in the proofreading step occurring at the peptidyl transferase center and thus would serve to optimize ribosomal fidelity. The chain is Dual-specificity RNA methyltransferase RlmN from Vibrio atlanticus (strain LGP32) (Vibrio splendidus (strain Mel32)).